We begin with the raw amino-acid sequence, 627 residues long: Serine/threonine-protein kinase Nek5 (627 aa).

A Protein kinase domain is found at 4–255; the sequence is FHLIKIIGEG…VTSLLKRPFL (252 aa). Residues 10 to 18 and Lys33 contribute to the ATP site; that span reads IGEGTFGKV. The active-site Proton acceptor is the Asp124. Residues 563–580 show a composition bias toward acidic residues; sequence QLEPGSDEDDIKFEESED. Disordered stretches follow at residues 563–582 and 591–627; these read QLEP…EDEL and EKLA…KKLQ. Over residues 609 to 619 the composition is skewed to basic and acidic residues; it reads NAEEPGEKEKT.

The protein belongs to the protein kinase superfamily. NEK Ser/Thr protein kinase family. NIMA subfamily. Requires Mg(2+) as cofactor.

The protein resides in the cell projection. Its subcellular location is the cilium. It is found in the flagellum. The enzyme catalyses L-seryl-[protein] + ATP = O-phospho-L-seryl-[protein] + ADP + H(+). It carries out the reaction L-threonyl-[protein] + ATP = O-phospho-L-threonyl-[protein] + ADP + H(+). This chain is Serine/threonine-protein kinase Nek5 (Nek5), found in Mus musculus (Mouse).